Consider the following 214-residue polypeptide: Large ribosomal subunit protein uL16-like (214 aa).

The protein belongs to the universal ribosomal protein uL16 family. Component of the 60S large ribosomal subunit (LSU).

The protein resides in the cytoplasm. In terms of biological role, testis-specific component of the ribosome, which is required for the transition from prophase to metaphase in male meiosis I. Compensates for the inactivated X-linked RPL10 paralog during spermatogenesis. The ribosome is a large ribonucleoprotein complex responsible for the synthesis of proteins in the cell. The small ribosomal subunit (SSU) binds messenger RNAs (mRNAs) and translates the encoded message by selecting cognate aminoacyl-transfer RNA (tRNA) molecules. The large subunit (LSU) contains the ribosomal catalytic site termed the peptidyl transferase center (PTC), which catalyzes the formation of peptide bonds, thereby polymerizing the amino acids delivered by tRNAs into a polypeptide chain. The nascent polypeptides leave the ribosome through a tunnel in the LSU and interact with protein factors that function in enzymatic processing, targeting, and the membrane insertion of nascent chains at the exit of the ribosomal tunnel. This Macaca fascicularis (Crab-eating macaque) protein is Large ribosomal subunit protein uL16-like (RPL10L).